Reading from the N-terminus, the 804-residue chain is Probable basic-leucine zipper transcription factor C (804 aa).

Disordered stretches follow at residues 86 to 148 (FISP…NDIN) and 275 to 371 (YGNV…PKKR). Positions 90-145 (NNNNNNNNNNNNNNNNNNNNNNNNNNNNNNNNNNNNNNNNNNNNNNNNNNNNNNNN) are enriched in low complexity. A compositionally biased stretch (polar residues) spans 275-291 (YGNVSDNSSPETNFSYA). A compositionally biased stretch (low complexity) spans 292–334 (SPSSPSSTQSQSSPYEQQPLSPNPTISLSSSISVTATTTTRPN). Residues 335–356 (ATEKTKESSLKSKSKSNEKDKE) are compositionally biased toward basic and acidic residues. In terms of domain architecture, bZIP spans 415-478 (ALNYQFRKIK…DQYKLQEKQK (64 aa)). Residues 421–436 (RKIKNRESARRSRERK) form a basic motif region. Residues 443–450 (LEAKIAEI) are leucine-zipper. Residues 670–693 (KNCNNNNENNNNNDNNKNSDDEKG) are disordered. Positions 672 to 685 (CNNNNENNNNNDNN) are enriched in low complexity.

This sequence belongs to the bZIP family.

The protein localises to the nucleus. Probable transcriptional regulator. In Dictyostelium discoideum (Social amoeba), this protein is Probable basic-leucine zipper transcription factor C (bzpC).